The sequence spans 788 residues: Multifunctional tryptophan biosynthesis protein (788 aa).

One can recognise a Glutamine amidotransferase type-1 domain in the interval 12-207 (DILMIDNFDS…MKLKGGTWEE (196 aa)). 63-65 (GPG) is a binding site for L-glutamine. C91 (nucleophile; for GATase activity) is an active-site residue. 141 to 142 (SL) is an L-glutamine binding site. Catalysis depends on for GATase activity residues H181 and E183. Positions 238–503 (ILEKICAQRQ…DTRAFIRQLL (266 aa)) are indole-3-glycerol phosphate synthase. The tract at residues 520 to 788 (LSRSCGIRTE…RAFVKAAKKL (269 aa)) is N-(5'-phosphoribosyl)anthranilate isomerase.

The catalysed reaction is N-(5-phospho-beta-D-ribosyl)anthranilate = 1-(2-carboxyphenylamino)-1-deoxy-D-ribulose 5-phosphate. It carries out the reaction 1-(2-carboxyphenylamino)-1-deoxy-D-ribulose 5-phosphate + H(+) = (1S,2R)-1-C-(indol-3-yl)glycerol 3-phosphate + CO2 + H2O. It catalyses the reaction chorismate + L-glutamine = anthranilate + pyruvate + L-glutamate + H(+). It functions in the pathway amino-acid biosynthesis; L-tryptophan biosynthesis; L-tryptophan from chorismate: step 1/5. It participates in amino-acid biosynthesis; L-tryptophan biosynthesis; L-tryptophan from chorismate: step 3/5. The protein operates within amino-acid biosynthesis; L-tryptophan biosynthesis; L-tryptophan from chorismate: step 4/5. Functionally, trifunctional enzyme bearing the Gln amidotransferase (GATase) domain of anthranilate synthase, indole-glycerolphosphate synthase, and phosphoribosylanthranilate isomerase activities. The polypeptide is Multifunctional tryptophan biosynthesis protein (TRPC) (Phanerodontia chrysosporium (White-rot fungus)).